The chain runs to 159 residues: Transcription elongation factor GreA (159 aa).

Positions 14-76 (IKKLENELEY…QLENMLKNAS (63 aa)) form a coiled coil.

Belongs to the GreA/GreB family.

Necessary for efficient RNA polymerase transcription elongation past template-encoded arresting sites. The arresting sites in DNA have the property of trapping a certain fraction of elongating RNA polymerases that pass through, resulting in locked ternary complexes. Cleavage of the nascent transcript by cleavage factors such as GreA or GreB allows the resumption of elongation from the new 3'terminus. GreA releases sequences of 2 to 3 nucleotides. The sequence is that of Transcription elongation factor GreA from Clostridium kluyveri (strain NBRC 12016).